Reading from the N-terminus, the 262-residue chain is Capsid protein (262 aa).

The disordered stretch occupies residues 183–262 (APTIEAITRP…SHHRSPSPRK (80 aa)). The short motif at 215–233 (RRRKVKTTVVYGRRRSKSR) is the Bipartite nuclear localization signal element. Basic residues-rich tracts occupy residues 215–234 (RRRKVKTTVVYGRRRSKSRE) and 252–262 (SSHHRSPSPRK).

The protein belongs to the avihepadnavirus core antigen family. In terms of assembly, homodimerizes, then multimerizes.

The protein localises to the virion. It localises to the host cytoplasm. In terms of biological role, self assembles to form an icosahedral capsid. Most capsid appear to be large particles with an icosahedral symmetry of T=4 and consist of 240 copies of capsid protein, though a fraction forms smaller T=3 particles consisting of 180 capsid proteins. Entering capsid are transported along microtubules to the nucleus. Phosphorylation of the capsid is thought to induce exposure of nuclear localization signal in the C-terminal portion of the capsid protein that allows binding to the nuclear pore complex via the importin (karyopherin-) alpha and beta. Capsids are imported in intact form through the nuclear pore into the nuclear basket, where it probably binds NUP153. Only capsids that contain the mature viral genome can release the viral DNA and capsid protein into the nucleoplasm. Immature capsids get stucked in the basket. Capsids encapsulate the pre-genomic RNA and the P protein. Pre-genomic RNA is reverse transcribed into DNA while the capsid is still in the cytoplasm. The capsid can then either be directed to the nucleus, providing more genome for transcription, or bud through the endoplasmic reticulum to provide new virions. The protein is Capsid protein (C) of Duck hepatitis B virus (isolate Shanghai/DHBVQCA34) (DHBV).